Here is a 78-residue protein sequence, read N- to C-terminus: D-alanyl carrier protein (78 aa).

Positions 1 to 78 (MEFREQVLNL…KIVEALEELR (78 aa)) constitute a Carrier domain. O-(pantetheine 4'-phosphoryl)serine is present on S36.

Belongs to the DltC family. Post-translationally, 4'-phosphopantetheine is transferred from CoA to a specific serine of apo-DCP.

Its subcellular location is the cytoplasm. The protein operates within cell wall biogenesis; lipoteichoic acid biosynthesis. In terms of biological role, carrier protein involved in the D-alanylation of lipoteichoic acid (LTA). The loading of thioester-linked D-alanine onto DltC is catalyzed by D-alanine--D-alanyl carrier protein ligase DltA. The DltC-carried D-alanyl group is further transferred to cell membrane phosphatidylglycerol (PG) by forming an ester bond, probably catalyzed by DltD. D-alanylation of LTA plays an important role in modulating the properties of the cell wall in Gram-positive bacteria, influencing the net charge of the cell wall. This Staphylococcus aureus (strain Mu50 / ATCC 700699) protein is D-alanyl carrier protein.